The primary structure comprises 897 residues: Molybdenum import ATP-binding protein ModC 2 (897 aa).

An ABC transporter domain is found at 6–236; the sequence is RGRIDAAFRG…PALPLAYSRD (231 aa). Residue 38–45 coordinates ATP; sequence GPSGCGKT. Residues 295 to 365 form the Mop domain; sequence ESSILNILPA…VKGVSLVRAS (71 aa). The tract at residues 823–848 is disordered; sequence LGDRSVLGPREPDAGAKGRKRQNDPE. The segment covering 832–848 has biased composition (basic and acidic residues); it reads REPDAGAKGRKRQNDPE.

Belongs to the ABC transporter superfamily. Molybdate importer (TC 3.A.1.8) family. As to quaternary structure, the complex is composed of two ATP-binding proteins (ModC), two transmembrane proteins (ModB) and a solute-binding protein (ModA).

The protein localises to the cell inner membrane. The enzyme catalyses molybdate(out) + ATP + H2O = molybdate(in) + ADP + phosphate + H(+). Functionally, part of the ABC transporter complex ModABC involved in molybdenum import. Responsible for energy coupling to the transport system. The sequence is that of Molybdenum import ATP-binding protein ModC 2 from Bradyrhizobium diazoefficiens (strain JCM 10833 / BCRC 13528 / IAM 13628 / NBRC 14792 / USDA 110).